The primary structure comprises 274 residues: NADPH-dependent 7-cyano-7-deazaguanine reductase (274 aa).

80-82 serves as a coordination point for substrate; sequence VES. Residue 82–83 coordinates NADPH; the sequence is SK. Catalysis depends on Cys181, which acts as the Thioimide intermediate. The Proton donor role is filled by Asp188. Residue 220–221 participates in substrate binding; it reads HE. 249–250 is an NADPH binding site; the sequence is RG.

Belongs to the GTP cyclohydrolase I family. QueF type 2 subfamily. Homodimer.

The protein resides in the cytoplasm. The enzyme catalyses 7-aminomethyl-7-carbaguanine + 2 NADP(+) = 7-cyano-7-deazaguanine + 2 NADPH + 3 H(+). The protein operates within tRNA modification; tRNA-queuosine biosynthesis. Its function is as follows. Catalyzes the NADPH-dependent reduction of 7-cyano-7-deazaguanine (preQ0) to 7-aminomethyl-7-deazaguanine (preQ1). The protein is NADPH-dependent 7-cyano-7-deazaguanine reductase of Burkholderia ambifaria (strain ATCC BAA-244 / DSM 16087 / CCUG 44356 / LMG 19182 / AMMD) (Burkholderia cepacia (strain AMMD)).